The chain runs to 304 residues: Protease HtpX homolog (304 aa).

A run of 2 helical transmembrane segments spans residues 14–34 (IFII…IGII) and 39–59 (YLNG…IMVM). Residue histidine 144 participates in Zn(2+) binding. Glutamate 145 is a catalytic residue. Position 148 (histidine 148) interacts with Zn(2+). Helical transmembrane passes span 159 to 179 (IAIA…RMIF) and 202 to 222 (AIIY…ATAI). Residue glutamate 231 participates in Zn(2+) binding.

Belongs to the peptidase M48B family. The cofactor is Zn(2+).

It localises to the cell membrane. This is Protease HtpX homolog from Listeria monocytogenes serovar 1/2a (strain ATCC BAA-679 / EGD-e).